The primary structure comprises 414 residues: Gamma-glutamyl phosphate reductase (414 aa).

Belongs to the gamma-glutamyl phosphate reductase family.

Its subcellular location is the cytoplasm. The enzyme catalyses L-glutamate 5-semialdehyde + phosphate + NADP(+) = L-glutamyl 5-phosphate + NADPH + H(+). Its pathway is amino-acid biosynthesis; L-proline biosynthesis; L-glutamate 5-semialdehyde from L-glutamate: step 2/2. Functionally, catalyzes the NADPH-dependent reduction of L-glutamate 5-phosphate into L-glutamate 5-semialdehyde and phosphate. The product spontaneously undergoes cyclization to form 1-pyrroline-5-carboxylate. The protein is Gamma-glutamyl phosphate reductase of Xanthomonas oryzae pv. oryzae (strain MAFF 311018).